Reading from the N-terminus, the 923-residue chain is Protocadherin gamma-B4 (923 aa).

The signal sequence occupies residues Met-1–Cys-30. 6 Cadherin domains span residues Glu-31–Phe-133, Thr-134–Phe-242, Ser-243–Val-345, Ile-346–Phe-450, Ser-451–Val-560, and Asp-568–Ile-673. Over Glu-31–Tyr-689 the chain is Extracellular. N-linked (GlcNAc...) asparagine glycans are attached at residues Asn-417 and Asn-543. The helical transmembrane segment at Leu-690–Ala-710 threads the bilayer. The Cytoplasmic segment spans residues Leu-711 to Lys-923. Disordered stretches follow at residues Ser-797–Asn-832 and Ala-893–Lys-923. Basic residues predominate over residues Asn-913 to Lys-923.

It localises to the cell membrane. In terms of biological role, potential calcium-dependent cell-adhesion protein. May be involved in the establishment and maintenance of specific neuronal connections in the brain. The sequence is that of Protocadherin gamma-B4 (PCDHGB4) from Pan troglodytes (Chimpanzee).